Here is a 279-residue protein sequence, read N- to C-terminus: Protein NipSnap homolog 1 (279 aa).

This sequence belongs to the NipSnap family.

Its subcellular location is the mitochondrion matrix. Protein involved in mitophagy. Accumulates on the mitochondria surface in response to mitochondrial depolarization and acts as a 'eat me' signal by recruiting proteins involved in selective autophagy. This chain is Protein NipSnap homolog 1, found in Danio rerio (Zebrafish).